Reading from the N-terminus, the 204-residue chain is MTDTIKIGVGGPVGAGKTQLIEKIVKRLAKDMSIGVITNDIYTKEDEKILVNSGVLPEDRIIGVETGGCPHTAIREDASMNFAAIDELKERNDDIELIFIESGGDNLAATFSPELVDFSIYIIDVAQGEKIPRKGGQGMIKSDFFVINKTDLAPYVGASLDRMAEDTKVFRGNRPFTFTNLKTDEGLDEVIQWIEQDVFLKGLA.

11-18 is a binding site for GTP; it reads GPVGAGKT.

This sequence belongs to the SIMIBI class G3E GTPase family. UreG subfamily. In terms of assembly, homodimer. UreD, UreF and UreG form a complex that acts as a GTP-hydrolysis-dependent molecular chaperone, activating the urease apoprotein by helping to assemble the nickel containing metallocenter of UreC. The UreE protein probably delivers the nickel.

It is found in the cytoplasm. Its function is as follows. Facilitates the functional incorporation of the urease nickel metallocenter. This process requires GTP hydrolysis, probably effectuated by UreG. This chain is Urease accessory protein UreG, found in Staphylococcus saprophyticus subsp. saprophyticus (strain ATCC 15305 / DSM 20229 / NCIMB 8711 / NCTC 7292 / S-41).